The primary structure comprises 116 residues: U16-barytoxin-Tl1f (116 aa).

An N-terminal signal peptide occupies residues 1 to 20 (MKTIIVFLSLLVLATKFGDA). Positions 21-74 (NEGVNQEQMKEVIQNEFREDFLNEMAAMSLLQQLEAIESTLLEKEADRNSRQKR) are excised as a propeptide. 3 cysteine pairs are disulfide-bonded: Cys75-Cys90, Cys82-Cys95, and Cys89-Cys110. A glycan (N-linked (GlcNAc...) asparagine) is linked at Asn85.

Belongs to the neurotoxin 14 (magi-1) family. 06 (ICK-Trit) subfamily. Expressed by the venom gland.

Its subcellular location is the secreted. In terms of biological role, ion channel inhibitor. The protein is U16-barytoxin-Tl1f of Trittame loki (Brush-footed trapdoor spider).